The primary structure comprises 459 residues: Inositol-trisphosphate 3-kinase A (459 aa).

The segment at 1–29 is disordered; that stretch reads MTLPGRPTGMARPRGAGPCSPGLERAPRR. An omega-N-methylarginine mark is found at arginine 35, arginine 55, and arginine 62. The disordered stretch occupies residues 49–164; that stretch reads AAAGEPRARG…TSEDVGQKSH (116 aa). Positions 116 to 132 are enriched in low complexity; sequence RRLSTSSLSSTGSSSLL. Serine 135 and serine 195 each carry phosphoserine. ATP-binding positions include serine 195, lysine 207, 247–249, and aspartate 260; that span reads QDL. Positions 262 and 283 each coordinate substrate. The tract at residues 285–293 is calmodulin-binding; that stretch reads DMYKKMLAV. 310-317 lines the substrate pocket; the sequence is KPRYMQWR. Positions 334 and 414 each coordinate ATP. Lysine 417 serves as a coordination point for substrate.

This sequence belongs to the inositol phosphokinase (IPK) family.

The protein localises to the cytoplasm. It is found in the cytoskeleton. The enzyme catalyses 1D-myo-inositol 1,4,5-trisphosphate + ATP = 1D-myo-inositol 1,3,4,5-tetrakisphosphate + ADP + H(+). With respect to regulation, activated by calcium/calmodulin. Catalyzes the phosphorylation of 1D-myo-inositol 1,4,5-trisphosphate (InsP3) into 1D-myo-inositol 1,3,4,5-tetrakisphosphate and participates to the regulation of calcium homeostasis. This is Inositol-trisphosphate 3-kinase A from Mus musculus (Mouse).